Reading from the N-terminus, the 2192-residue chain is BEACH domain-containing protein lvsE (2192 aa).

4 disordered regions span residues 948–969 (STSL…TSTG), 996–1065 (TTTT…DEPE), 1160–1303 (NESQ…NNLS), and 1343–1363 (DENG…SSSN). Residues 996–1049 (TTTTTTTTTTTTTTSTTSNTGNDSPLSIESPISSPVLIENTTNTTNTTTTNTTN) are compositionally biased toward low complexity. Over residues 1171–1187 (NIDNLNPNTGLPYNKST) the composition is skewed to polar residues. Low complexity predominate over residues 1188 to 1231 (NNLSNVNNVNNNNNNNSNNINVSGNNTIGPSSSKSPLRNSRSMS). Residues 1232–1243 (IGSSATKSPSRQ) show a composition bias toward polar residues. Low complexity-rich tracts occupy residues 1253–1303 (NNNS…NNLS) and 1350–1363 (SSPN…SSSN). The BEACH-type PH domain maps to 1366 to 1491 (IEEEKFIGSW…ESIQIFNKIV (126 aa)). The region spanning 1504–1795 (DHPSKIIKKS…QLFSKPHPIR (292 aa)) is the BEACH domain. Residues 1823–1849 (GTINSSFSSTSTSTSTSSPPPSTLNSP) show a composition bias toward low complexity. Residues 1823–1851 (GTINSSFSSTSTSTSTSSPPPSTLNSPQG) form a disordered region. WD repeat units lie at residues 1973 to 2012 (FHHD…IKDS), 2022 to 2061 (SHDE…YQRS), and 2156 to 2192 (DSPA…VKDL).

This is BEACH domain-containing protein lvsE (lvsE) from Dictyostelium discoideum (Social amoeba).